The primary structure comprises 807 residues: MPKQDSLWLKSLRWIQKHLVHTIVVPQDPFADLNLDTSRPLAYVMKTESLSDIAALSEVTEKLGLPSPYEPLVVNGVVAPRVVCLQGRKPLFGERAGNEPFLECFMRLLAVHKERPELDIQLVPVSLYWGRTPGKEDDTMKAAVLERENPTWLRKCFMILFLGRHNFVQFSNAVSLRYMADEHGTDMGIAHKLARVARVHFRRQRKVMTGPLLPNRQALFDSLLKSESLRKAIQEEAVSKKISETQSRETAIEYLDEIAANYSDSLVRIAERFLTWLWNKLYSGINIKGAEHIRQLHHDGHEIVYVPCHRSHMDYLLLSYILYYQGMVPPHIAAGINLNFWPAGPLFRRGGAFFIRRSFNGNKLYTAVFREYLDQLFAKGYSVEYFSEGGRSRTGRLLAPKTGMIAMTMNSVLRGIERPVTLVPVYLGYDHVMEVATYHKELSGKKKQKESVWQVFGAIRKLGNFGQGYVNFGEPITLQTFLNEMAPNWRAELADDPEQKPTWLTPAVNVLANRVMTRINDAAAASSVTLTSLALLASEQNALERCLLERQLDLYLTLLKRVPYTSFTSVAEGDGKHLVQQGIDLNKFSVSSDPLGEIVSIDANQAISMTYYRNNIIHLFIIPSLIASCLTHNEQSQRQQIVAIVNDFYPLLKAELFMGIKDIPSYVNQVLDLFIEQGLITESDNLSVVTEHSSQLVLLSGSVSETLQRYAIIFNLLAHRPKMERSELESESHLLAQRLGALHGITAPEFYDKKLYGTLSVKLKELGYLSDKDDKSDVKRIRDQANSLLRASVRQTIVASVTAEHIS.

The HXXXXD motif motif lies at Cys308 to Met313.

The protein belongs to the GPAT/DAPAT family.

It localises to the cell inner membrane. The catalysed reaction is sn-glycerol 3-phosphate + an acyl-CoA = a 1-acyl-sn-glycero-3-phosphate + CoA. It participates in phospholipid metabolism; CDP-diacylglycerol biosynthesis; CDP-diacylglycerol from sn-glycerol 3-phosphate: step 1/3. The polypeptide is Glycerol-3-phosphate acyltransferase (Shewanella sp. (strain W3-18-1)).